The following is a 222-amino-acid chain: Putative N-acetylmannosamine-6-phosphate 2-epimerase (222 aa).

Belongs to the NanE family.

The enzyme catalyses an N-acyl-D-glucosamine 6-phosphate = an N-acyl-D-mannosamine 6-phosphate. It functions in the pathway amino-sugar metabolism; N-acetylneuraminate degradation; D-fructose 6-phosphate from N-acetylneuraminate: step 3/5. In terms of biological role, converts N-acetylmannosamine-6-phosphate (ManNAc-6-P) to N-acetylglucosamine-6-phosphate (GlcNAc-6-P). The polypeptide is Putative N-acetylmannosamine-6-phosphate 2-epimerase (Staphylococcus aureus (strain bovine RF122 / ET3-1)).